The chain runs to 345 residues: Dihydroorotate dehydrogenase (quinone) (345 aa).

FMN-binding positions include A65–K69 and T89. K69 lines the substrate pocket. N114 to F118 provides a ligand contact to substrate. Residues N142 and N175 each contribute to the FMN site. N175 provides a ligand contact to substrate. The Nucleophile role is filled by S178. N180 serves as a coordination point for substrate. FMN-binding residues include K220 and T248. N249–T250 contributes to the substrate binding site. FMN is bound by residues G271, G300, and Y321–T322.

Belongs to the dihydroorotate dehydrogenase family. Type 2 subfamily. Monomer. It depends on FMN as a cofactor.

The protein localises to the cell membrane. The catalysed reaction is (S)-dihydroorotate + a quinone = orotate + a quinol. The protein operates within pyrimidine metabolism; UMP biosynthesis via de novo pathway; orotate from (S)-dihydroorotate (quinone route): step 1/1. Catalyzes the conversion of dihydroorotate to orotate with quinone as electron acceptor. In Burkholderia cenocepacia (strain HI2424), this protein is Dihydroorotate dehydrogenase (quinone).